Here is a 236-residue protein sequence, read N- to C-terminus: Transcription repressor MYB6 (236 aa).

HTH myb-type domains are found at residues 9 to 61 and 62 to 116; these read KAHT…INYL and RPDL…KRKL. 2 DNA-binding regions (H-T-H motif) span residues 37-61 and 89-112; these read WRSL…INYL and WSLI…NTHI. The tract at residues 159-181 is disordered; sequence PKTENSSDNGASTSGTTTDEDLR. Residues 162–175 show a composition bias toward polar residues; sequence ENSSDNGASTSGTT.

As to quaternary structure, interacts with BHLH012/MYC1 and BHLH042/TT8. In terms of tissue distribution, expressed in roots, stems, flower buds, and siliques.

The protein resides in the nucleus. This is Transcription repressor MYB6 (MYB6) from Arabidopsis thaliana (Mouse-ear cress).